The sequence spans 167 residues: Nascent polypeptide-associated complex subunit beta (167 aa).

Disordered regions lie at residues 1-48 and 133-167; these read MDQA…GADD and QNMQ…SKVE. Positions 25-42 are enriched in basic residues; it reads NRNRGKGTPRRKVKKVHK. The 66-residue stretch at 45–110 folds into the NAC-A/B domain; the sequence is GADDKKLQAT…GEEKELTELV (66 aa). The span at 148-161 shows a compositional bias: acidic residues; that stretch reads DEEDDIPDLVEGQD.

This sequence belongs to the NAC-beta family. In terms of assembly, part of the nascent polypeptide-associated complex (NAC), consisting of egd2 and egd1. NAC associates with ribosomes via egd1.

It is found in the cytoplasm. It localises to the nucleus. Its function is as follows. Component of the nascent polypeptide-associated complex (NAC), a dynamic component of the ribosomal exit tunnel, protecting the emerging polypeptides from interaction with other cytoplasmic proteins to ensure appropriate nascent protein targeting. The NAC complex also promotes mitochondrial protein import by enhancing productive ribosome interactions with the outer mitochondrial membrane and blocks the inappropriate interaction of ribosomes translating non-secretory nascent polypeptides with translocation sites in the membrane of the endoplasmic reticulum. EGD1 may act as a transcription factor that exert a negative effect on the expression of several genes that are transcribed by RNA polymerase II. In Aspergillus terreus (strain NIH 2624 / FGSC A1156), this protein is Nascent polypeptide-associated complex subunit beta (egd1).